The sequence spans 450 residues: Bifunctional protein GlmU (450 aa).

Residues 1-217 are pyrophosphorylase; it reads MKTLILAAGL…VDEITGVNNR (217 aa). UDP-N-acetyl-alpha-D-glucosamine-binding positions include 6–9, lysine 20, glutamine 68, 73–74, 95–97, glycine 134, glutamate 146, asparagine 161, and asparagine 215; these read LAAG, GT, and YGD. Mg(2+) is bound at residue aspartate 97. Residue asparagine 215 participates in Mg(2+) binding. A linker region spans residues 218–238; sequence IQLANLEKKIRRKINEKLMNQ. The N-acetyltransferase stretch occupies residues 239 to 450; the sequence is GVRIIDPNAV…GGQKNANNKK (212 aa). UDP-N-acetyl-alpha-D-glucosamine contacts are provided by arginine 320 and lysine 338. Histidine 350 (proton acceptor) is an active-site residue. Residues tyrosine 353 and asparagine 364 each contribute to the UDP-N-acetyl-alpha-D-glucosamine site. Acetyl-CoA is bound by residues alanine 367, 373–374, serine 392, alanine 410, and arginine 427; that span reads NY.

The protein in the N-terminal section; belongs to the N-acetylglucosamine-1-phosphate uridyltransferase family. This sequence in the C-terminal section; belongs to the transferase hexapeptide repeat family. In terms of assembly, homotrimer. Mg(2+) is required as a cofactor.

The protein resides in the cytoplasm. The catalysed reaction is alpha-D-glucosamine 1-phosphate + acetyl-CoA = N-acetyl-alpha-D-glucosamine 1-phosphate + CoA + H(+). It catalyses the reaction N-acetyl-alpha-D-glucosamine 1-phosphate + UTP + H(+) = UDP-N-acetyl-alpha-D-glucosamine + diphosphate. The protein operates within nucleotide-sugar biosynthesis; UDP-N-acetyl-alpha-D-glucosamine biosynthesis; N-acetyl-alpha-D-glucosamine 1-phosphate from alpha-D-glucosamine 6-phosphate (route II): step 2/2. It participates in nucleotide-sugar biosynthesis; UDP-N-acetyl-alpha-D-glucosamine biosynthesis; UDP-N-acetyl-alpha-D-glucosamine from N-acetyl-alpha-D-glucosamine 1-phosphate: step 1/1. Its pathway is bacterial outer membrane biogenesis; LPS lipid A biosynthesis. Catalyzes the last two sequential reactions in the de novo biosynthetic pathway for UDP-N-acetylglucosamine (UDP-GlcNAc). The C-terminal domain catalyzes the transfer of acetyl group from acetyl coenzyme A to glucosamine-1-phosphate (GlcN-1-P) to produce N-acetylglucosamine-1-phosphate (GlcNAc-1-P), which is converted into UDP-GlcNAc by the transfer of uridine 5-monophosphate (from uridine 5-triphosphate), a reaction catalyzed by the N-terminal domain. In Thermosipho melanesiensis (strain DSM 12029 / CIP 104789 / BI429), this protein is Bifunctional protein GlmU.